A 350-amino-acid polypeptide reads, in one-letter code: MNDTFLKACRRENTPYTPVWLMRQAGRYMAEYMEIRNKYSFLEMCKTPELAVEVTLQPVRKLGVDAAILFADILLPLEGMGIGFRFARDEGPVIENPVRTIVDVKKVRVITPEEDVPYVLEAIKILRRELAGKVPLIGFSGAPFTLASYIIEGGGSKNYIQCKRLMWEAPEAWHELLGKIAESTVRYLKAQIAAGAQAVQVFDSWVGTLSPEDYEKYVLPHSKYVFDNLKETGVPVIHFANNAGSMLELVAAAGGDVIGLDWRVSLDRAWQTVGFDRGVQGNLDPVALFAPKEVIRQKVKEILIKAGKRPGHIFNLGHGIHKETPVENAQYLVEVVHELSSLSYEQLLEA.

Substrate is bound by residues 23 to 27, Asp72, Tyr149, Ser204, and His318; that span reads RQAGR.

It belongs to the uroporphyrinogen decarboxylase family. As to quaternary structure, homodimer.

It localises to the cytoplasm. The enzyme catalyses uroporphyrinogen III + 4 H(+) = coproporphyrinogen III + 4 CO2. The protein operates within porphyrin-containing compound metabolism; protoporphyrin-IX biosynthesis; coproporphyrinogen-III from 5-aminolevulinate: step 4/4. Its function is as follows. Catalyzes the decarboxylation of four acetate groups of uroporphyrinogen-III to yield coproporphyrinogen-III. This chain is Uroporphyrinogen decarboxylase, found in Carboxydothermus hydrogenoformans (strain ATCC BAA-161 / DSM 6008 / Z-2901).